The sequence spans 92 residues: MNKMTPEEIETALKPIADWQLSEADGATAIERVFRFDDFVQAIAFVNKVAERAETAGHHPDIHIHYNRVRLVLSTHDAGGVTSKDLEMAAAL.

It belongs to the pterin-4-alpha-carbinolamine dehydratase family.

The enzyme catalyses (4aS,6R)-4a-hydroxy-L-erythro-5,6,7,8-tetrahydrobiopterin = (6R)-L-erythro-6,7-dihydrobiopterin + H2O. In Gloeobacter violaceus (strain ATCC 29082 / PCC 7421), this protein is Putative pterin-4-alpha-carbinolamine dehydratase 2.